Consider the following 145-residue polypeptide: Transcriptional regulator MraZ (145 aa).

SpoVT-AbrB domains lie at 5–49 and 78–121; these read TYNH…LESE and TYKV…AKEV.

The protein belongs to the MraZ family. As to quaternary structure, forms oligomers.

The protein localises to the cytoplasm. It localises to the nucleoid. This Ureaplasma urealyticum serovar 10 (strain ATCC 33699 / Western) protein is Transcriptional regulator MraZ.